The primary structure comprises 282 residues: Complement component 1 Q subcomponent-binding protein, mitochondrial (282 aa).

The transit peptide at 1–73 directs the protein to the mitochondrion; that stretch reads MLPLLRCVPR…PCACGCGCGS (73 aa). Positions 76-93 are C1q binding; the sequence is TDGDKAFVDFLSDEIKEE. Ser-87 is modified (phosphoserine). At Lys-91 the chain carries N6-acetyllysine. A disordered region spans residues 138 to 164; that stretch reads SIPPTFDGEEEPSQGQKVEEQEPELTS. Residues 168-213 are interaction with MAVS; sequence FVVEVIKNDDGKKALVLDCHYPEDEVGQEDEAESDIFSIREVSFQS. Residue Tyr-188 is modified to Phosphotyrosine. Phosphoserine is present on residues Ser-201 and Ser-205. A Phosphothreonine modification is found at Thr-214.

It belongs to the MAM33 family. As to quaternary structure, homotrimer; three monomers form a donut-shaped structure with an unusually asymmetric charge distribution on the surface. Interacts with CDK13, HRK, VTN, NFYB, ADRA1B, FOXC1, DDX21, DDX50, NCL, SRSF1, SRSF9 and CDKN2A isoform smARF. Interacts with CD93; the association may represent a cell surface C1q receptor. Interacts with KRT1; the association represents a cell surface kininogen receptor. Interacts with CD209; the interaction is indicative for a C1q:C1QBP:CD209 signaling complex. Interacts with FBL and RRP1; the respective interactions with C1QBP are competitive. Probably associates with the mitoribosome. Interacts with MAVS; the interaction occurs upon viral transfection. Interacts with PPIF. Interacts with U2AF1L4. Interacts with PLEKHN1. Interacts with VGF-derived peptide TLQP-21. Interacts with POLGARF which is produced from an alternative reading frame of the POLG gene; the interaction results in nucleolar localization of C1QBP, probably due to prevention of C1QBP maturation and redirection from mitochondria to nucleoli. Interacts with MRE11 and RAD50; forming the MRC (MRE11-RAD50-C1QBP) complex that inhibits the activity of MRE11. In terms of assembly, (Microbial infection) Interacts with Rubella virus capsid protein; the interaction occurs in mitochondria. Interacts with Rubella virus protease/methyltransferase p150. (Microbial infection) Interacts with Staphylococcus aureus protein A/spa. As to quaternary structure, (Microbial infection) Interacts with Staphylococcus aureus protein A/spa, HIV-1 Tat and HCV core protein. In terms of assembly, (Microbial infection) Interacts with HIV-1 Tat and HCV core protein. (Microbial infection) Interacts with L.monocytogenes internalin B. As to quaternary structure, (Microbial infection) Interacts with Epstein-Barr virus EBNA1. As to expression, expressed on cell surface of peripheral blood cells (at protein level); Surface expression is reported for macrophages and monocyte-derived dendritic cells.

The protein resides in the mitochondrion matrix. Its subcellular location is the nucleus. It is found in the nucleolus. The protein localises to the cell membrane. It localises to the secreted. The protein resides in the cytoplasm. Functionally, multifunctional and multicompartmental protein involved in inflammation and infection processes, ribosome biogenesis, protein synthesis in mitochondria, regulation of apoptosis, transcriptional regulation and pre-mRNA splicing. At the cell surface is thought to act as an endothelial receptor for plasma proteins of the complement and kallikrein-kinin cascades. Putative receptor for C1q; specifically binds to the globular 'heads' of C1q thus inhibiting C1; may perform the receptor function through a complex with C1qR/CD93. In complex with cytokeratin-1/KRT1 is a high affinity receptor for kininogen-1/HMWK. Can also bind other plasma proteins, such as coagulation factor XII leading to its autoactivation. May function to bind initially fluid kininogen-1 to the cell membrane. The secreted form may enhance both extrinsic and intrinsic coagulation pathways. It is postulated that the cell surface form requires docking with transmembrane proteins for downstream signaling which might be specific for a cell-type or response. By acting as C1q receptor is involved in chemotaxis of immature dendritic cells and neutrophils and is proposed to signal through CD209/DC-SIGN on immature dendritic cells, through integrin alpha-4/beta-1 during trophoblast invasion of the decidua, and through integrin beta-1 during endothelial cell adhesion and spreading. Signaling involved in inhibition of innate immune response is implicating the PI3K-AKT/PKB pathway. Required for protein synthesis in mitochondria. In mitochondrial translation may be involved in formation of functional 55S mitoribosomes; the function seems to involve its RNA-binding activity. Acts as a RNA modification reader, which specifically recognizes and binds mitochondrial RNAs modified by C5-methylcytosine (m5C) in response to stress, and promotes recruitment of the mitochondrial degradosome complex, leading to their degradation. May be involved in the nucleolar ribosome maturation process; the function may involve the exchange of FBL for RRP1 in the association with pre-ribosome particles. Involved in regulation of RNA splicing by inhibiting the RNA-binding capacity of SRSF1 and its phosphorylation. Is required for the nuclear translocation of splicing factor U2AF1L4. Involved in regulation of CDKN2A- and HRK-mediated apoptosis. Stabilizes mitochondrial CDKN2A isoform smARF. May be involved in regulation of FOXC1 transcriptional activity and NFY/CCAAT-binding factor complex-mediated transcription. May play a role in antibacterial defense as it can bind to cell surface hyaluronan and inhibit Streptococcus pneumoniae hyaluronate lyase. May be involved in modulation of the immune response; ligation by HCV core protein is resulting in suppression of interleukin-12 production in monocyte-derived dendritic cells. Involved in regulation of antiviral response by inhibiting RIGI- and IFIH1-mediated signaling pathways probably involving its association with MAVS after viral infection. Acts as a regulator of DNA repair via homologous recombination by inhibiting the activity of MRE11: interacts with unphosphorylated MRE11 and RAD50 in absence of DNA damage, preventing formation and activity of the MRN complex. Following DNA damage, dissociates from phosphorylated MRE11, allowing formation of the MRN complex. Its function is as follows. (Microbial infection) Involved in HIV-1 replication, presumably by contributing to splicing of viral RNA. (Microbial infection) In infection processes acts as an attachment site for microbial proteins, including Listeria monocytogenes internalin B (InlB) and Staphylococcus aureus protein A. In terms of biological role, (Microbial infection) Involved in replication of Rubella virus. This chain is Complement component 1 Q subcomponent-binding protein, mitochondrial (C1QBP), found in Homo sapiens (Human).